Reading from the N-terminus, the 119-residue chain is Large ribosomal subunit protein bL20 (119 aa).

Belongs to the bacterial ribosomal protein bL20 family.

In terms of biological role, binds directly to 23S ribosomal RNA and is necessary for the in vitro assembly process of the 50S ribosomal subunit. It is not involved in the protein synthesizing functions of that subunit. The protein is Large ribosomal subunit protein bL20 of Clostridium beijerinckii (strain ATCC 51743 / NCIMB 8052) (Clostridium acetobutylicum).